A 76-amino-acid polypeptide reads, in one-letter code: KANTR integral membrane protein (76 aa).

Positions 1 to 25 (MSPFSLLILVICAFSLFFLINLSRG) are cleaved as a signal peptide. The Extracellular segment spans residues 26–34 (LSILLVFTK). The chain crosses the membrane as a helical span at residues 35–55 (NQLLALLLLSIVSLFSISLIS). The Cytoplasmic portion of the chain corresponds to 56 to 76 (ALIFFDLLPSTFFGFILLLFF).

Its subcellular location is the membrane. The chain is KANTR integral membrane protein from Mus musculus (Mouse).